The chain runs to 155 residues: SsrA-binding protein (155 aa).

This sequence belongs to the SmpB family.

The protein resides in the cytoplasm. In terms of biological role, required for rescue of stalled ribosomes mediated by trans-translation. Binds to transfer-messenger RNA (tmRNA), required for stable association of tmRNA with ribosomes. tmRNA and SmpB together mimic tRNA shape, replacing the anticodon stem-loop with SmpB. tmRNA is encoded by the ssrA gene; the 2 termini fold to resemble tRNA(Ala) and it encodes a 'tag peptide', a short internal open reading frame. During trans-translation Ala-aminoacylated tmRNA acts like a tRNA, entering the A-site of stalled ribosomes, displacing the stalled mRNA. The ribosome then switches to translate the ORF on the tmRNA; the nascent peptide is terminated with the 'tag peptide' encoded by the tmRNA and targeted for degradation. The ribosome is freed to recommence translation, which seems to be the essential function of trans-translation. The protein is SsrA-binding protein of Chelativorans sp. (strain BNC1).